The sequence spans 86 residues: Acyl carrier protein (86 aa).

In terms of domain architecture, Carrier spans 10–85 (DKIEQKVIEM…DVIQYIKERQ (76 aa)). Serine 45 is subject to O-(pantetheine 4'-phosphoryl)serine.

It belongs to the acyl carrier protein (ACP) family. 4'-phosphopantetheine is transferred from CoA to a specific serine of apo-ACP by AcpS. This modification is essential for activity because fatty acids are bound in thioester linkage to the sulfhydryl of the prosthetic group.

The protein localises to the cytoplasm. Its pathway is lipid metabolism; fatty acid biosynthesis. In terms of biological role, carrier of the growing fatty acid chain in fatty acid biosynthesis. The sequence is that of Acyl carrier protein from Rickettsia canadensis (strain McKiel).